Consider the following 191-residue polypeptide: Ribosomal RNA small subunit methyltransferase G (191 aa).

Residues glycine 62, phenylalanine 67, isoleucine 111–glutamate 112, and arginine 124 each bind S-adenosyl-L-methionine.

Belongs to the methyltransferase superfamily. RNA methyltransferase RsmG family.

The protein localises to the cytoplasm. It carries out the reaction guanosine(527) in 16S rRNA + S-adenosyl-L-methionine = N(7)-methylguanosine(527) in 16S rRNA + S-adenosyl-L-homocysteine. Specifically methylates the N7 position of guanine in position 527 of 16S rRNA. In Rickettsia typhi (strain ATCC VR-144 / Wilmington), this protein is Ribosomal RNA small subunit methyltransferase G.